The primary structure comprises 700 residues: Polyribonucleotide nucleotidyltransferase (700 aa).

Mg(2+) is bound by residues D485 and D491. Residues 552-611 (PRITVIKINPEKIRDVIGKGGAVIRALTEETGTTIELEDDGTVKIASSNGEATKEAIRRI) enclose the KH domain. One can recognise an S1 motif domain in the interval 621–689 (GRIYNGKVIR…RQGRVRLSIK (69 aa)).

Belongs to the polyribonucleotide nucleotidyltransferase family. As to quaternary structure, component of the RNA degradosome, which is a multiprotein complex involved in RNA processing and mRNA degradation. It depends on Mg(2+) as a cofactor.

The protein resides in the cytoplasm. The catalysed reaction is RNA(n+1) + phosphate = RNA(n) + a ribonucleoside 5'-diphosphate. In terms of biological role, involved in mRNA degradation. Catalyzes the phosphorolysis of single-stranded polyribonucleotides processively in the 3'- to 5'-direction. In Shewanella baltica (strain OS155 / ATCC BAA-1091), this protein is Polyribonucleotide nucleotidyltransferase.